The sequence spans 164 residues: uncharacterized protein (164 aa).

One can recognise a BFN domain in the interval 1–129 (MGEVRVVGIR…AVLAQAGLLI (129 aa)).

This is an uncharacterized protein from Mycobacterium tuberculosis (strain CDC 1551 / Oshkosh).